The primary structure comprises 206 residues: Ras-related protein ralB-B (206 aa).

21–28 (GSGGVGKS) serves as a coordination point for GTP. The short motif at 43 to 51 (YEPTKADSY) is the Effector region element. Residues 68–72 (DTAGQ) and 128–131 (NKSD) each bind GTP. The segment covering 180-189 (KMSENKDKNG) has biased composition (basic and acidic residues). The tract at residues 180-206 (KMSENKDKNGKKSGKSKKGFKQRCCLL) is disordered. A compositionally biased stretch (basic residues) spans 190–200 (KKSGKSKKGFK). Residue cysteine 203 is modified to Cysteine methyl ester. Cysteine 203 carries the S-geranylgeranyl cysteine lipid modification. Residues 204 to 206 (CLL) constitute a propeptide, removed in mature form.

This sequence belongs to the small GTPase superfamily. Ras family. In terms of assembly, interacts with ralbp1 and rap1gds1.

The protein resides in the cell membrane. Its subcellular location is the midbody. It catalyses the reaction GTP + H2O = GDP + phosphate + H(+). Functionally, multifunctional GTPase involved in a variety of cellular processes including gene expression, cell migration, cell proliferation, oncogenic transformation and membrane trafficking. Accomplishes its multiple functions by interacting with distinct downstream effectors. Acts as a GTP sensor for GTP-dependent exocytosis of dense core vesicles. Required both to stabilize the assembly of the exocyst complex and to localize functional exocyst complexes to the leading edge of migrating cells. Required for suppression of apoptosis. In late stages of cytokinesis, upon completion of the bridge formation between dividing cells, mediates exocyst recruitment to the midbody to drive abscission. Regulates the actin cytoskeleton to play a role in gastrulation or neurulation. During the cleavage stages, the GTP-bound form induces a cortical reaction that affects the localization of pigment granules. Activated by the FGF pathway via ras and ral-GDS, but independently of raf. Directs ralbp1 to the plasma membrane. Involved in ligand-dependent receptor mediated endocytosis of the EGF and insulin receptors. The polypeptide is Ras-related protein ralB-B (ralb-b) (Xenopus laevis (African clawed frog)).